A 305-amino-acid chain; its full sequence is Alpha-N-acetylgalactosaminide alpha-2,6-sialyltransferase 3 (305 aa).

Residues 1–8 lie on the Cytoplasmic side of the membrane; it reads MACILKRK. The chain crosses the membrane as a helical; Signal-anchor for type II membrane protein span at residues 9-28; the sequence is SVIAVSFIAAFLFLLVVRLV. Residues 29-305 lie on the Lumenal side of the membrane; the sequence is NEVNFPLLLN…IFTHPNWTLS (277 aa). C80 and C229 are oxidised to a cystine. N148, N239, and N301 each carry an N-linked (GlcNAc...) asparagine glycan.

Belongs to the glycosyltransferase 29 family. Expressed in brain and kidney. Observed in the epithelium of the proximal tubules, marginal expression was also found in the distal tubules and collecting tubules.

It is found in the golgi apparatus membrane. It catalyses the reaction an alpha-Neu5Ac-(2-&gt;3)-beta-D-Gal-(1-&gt;3)-D-GlcNAc derivative + CMP-N-acetyl-beta-neuraminate = an alpha-Neu5Ac-(2-&gt;3)-beta-D-Gal-(1-&gt;3)-[alpha-Neu5Ac-(2-&gt;6)]-D-GlcNAc derivative + CMP + H(+). The enzyme catalyses a ganglioside GM1b (d18:1(4E)) + CMP-N-acetyl-beta-neuraminate = a ganglioside GD1alpha (d18:1(4E)) + CMP + H(+). The catalysed reaction is a globoside MSGG + CMP-N-acetyl-beta-neuraminate = a globoside DSGG + CMP + H(+). It carries out the reaction 3-O-[alpha-Neu5Ac-(2-&gt;3)-beta-D-Gal-(1-&gt;3)-alpha-D-GalNAc]-L-Ser-[protein] + CMP-N-acetyl-beta-neuraminate = a 3-O-{alpha-Neu5Ac-(2-&gt;3)-beta-D-Gal-(1-&gt;3)-[alpha-Neu5Ac-(2-&gt;6)]-alpha-D-GalNAc}-L-seryl-[protein] + CMP + H(+). It catalyses the reaction 3-O-[alpha-Neu5Ac-(2-&gt;3)-beta-D-Gal-(1-&gt;3)-alpha-D-GalNAc]-L-Thr-[protein] + CMP-N-acetyl-beta-neuraminate = a 3-O-{alpha-Neu5Ac-(2-&gt;3)-beta-D-Gal-(1-&gt;3)-[alpha-Neu5Ac-(2-&gt;6)]-alpha-D-GalNAc}-L-threonyl-[protein] + CMP + H(+). The protein operates within protein modification; protein glycosylation. Its pathway is glycolipid biosynthesis. Transfers the sialyl group (N-acetyl-alpha-neuraminyl or NeuAc) from CMP-NeuAc to the GalNAc residue on the NeuAc-alpha-2,3-Gal-beta-1,3-GalNAc sequence of glycoproteins and glycolipids forming an alpha-2,6-linkage. Produces branched type disialyl structures by transfer of a sialyl group onto a GalNAc residue inside the backbone core chains. ST6GalNAcIII prefers glycolipids to glycoproteins, predominantly catalyzing the biosynthesis of ganglioside GD1alpha from GM1b. GD1alpha is a critical molecule in the communication and interaction between neuronal cells and their supportive cells, particularly in brain tissues, and functions as an adhesion molecule in the process of metastasis. Sialylation of glycoproteins or glycosphingolipids is very important in tumor development, neuronal development, nerve repair, immunological processes and regulation of hormone sensitivity. The polypeptide is Alpha-N-acetylgalactosaminide alpha-2,6-sialyltransferase 3 (ST6GALNAC3) (Homo sapiens (Human)).